Here is a 356-residue protein sequence, read N- to C-terminus: Probable neutral protease 2 homolog ARB_04769 (356 aa).

Residues 1 to 17 (MQFTALLAALGAPLALA) form the signal peptide. The propeptide occupies 18–183 (ASIPAAAHNH…DDSTGVIDKR (166 aa)). Intrachain disulfides connect Cys191–Cys262 and Cys269–Cys287. Asn205 carries an N-linked (GlcNAc...) asparagine glycan. A Zn(2+)-binding site is contributed by His311. Glu312 is an active-site residue. Zn(2+) is bound by residues His315 and Asp326.

Belongs to the peptidase M35 family. The cofactor is Zn(2+).

Its subcellular location is the secreted. It carries out the reaction Preferential cleavage of bonds with hydrophobic residues in P1'. Also 3-Asn-|-Gln-4 and 8-Gly-|-Ser-9 bonds in insulin B chain.. In terms of biological role, probable secreted metalloprotease that shows high activities on basic nuclear substrates such as histone and protamine. May be involved in virulence. This Arthroderma benhamiae (strain ATCC MYA-4681 / CBS 112371) (Trichophyton mentagrophytes) protein is Probable neutral protease 2 homolog ARB_04769.